A 532-amino-acid polypeptide reads, in one-letter code: E3 ubiquitin-protein ligase MGRN1 (532 aa).

G2 carries N-myristoyl glycine lipidation. The RING-type zinc finger occupies 277–316 (ECVVCLSDLRDTLILPCRHLCLCTSCADTLRYQANNCPIC). A Required for TSG101-binding motif is present at residues 384–387 (PSAP). The residue at position 389 (Y389) is a Phosphotyrosine. The tract at residues 419-518 (LQKGKTQSKS…QPVPPADIYL (100 aa)) is disordered. Polar residues predominate over residues 422 to 435 (GKTQSKSPDSTLRS). Phosphoserine is present on residues S428, S449, S452, and S501. The span at 442–453 (EEDEEKLSEDSD) shows a compositional bias: acidic residues.

As to quaternary structure, interacts with MC1R and MC4R. Interacts with TSG101. Interacts with mislocalized cytosolically exposed PRNP; this interaction alters MGRN1 subcellular location and causes lysosomal enlargement. Autoubiquitinated in vitro. As to expression, widely expressed, with highest levels in brain, heart, kidney and liver. In the CNS, especially prominent in the Purkinje cells of the cerebellum. In the skin, expressed in the basal layer of the epidermis and hair follicles, primarily in the outer root sheath. Isoforms 1, 3, 4 and 5 are equally expressed in the liver. Isoforms 1, 3 and 4 are most abundant in brain, kidney and heart, respectively.

It is found in the early endosome. The protein resides in the cytoplasm. It localises to the cell membrane. Its subcellular location is the nucleus. The catalysed reaction is S-ubiquitinyl-[E2 ubiquitin-conjugating enzyme]-L-cysteine + [acceptor protein]-L-lysine = [E2 ubiquitin-conjugating enzyme]-L-cysteine + N(6)-ubiquitinyl-[acceptor protein]-L-lysine.. The protein operates within protein modification; protein ubiquitination. In terms of biological role, E3 ubiquitin-protein ligase. Mediates TSG101 monoubiquitination at multiple sites. Plays a role in the regulation of endosome-to-lysosome trafficking. Impairs MC1R- and MC4R-signaling by competing with GNAS-binding to MCRs and inhibiting agonist-induced cAMP production. Does not inhibit ADRB2-signaling. Does not promote MC1R ubiquitination. Also acts as a negative regulator of hedgehog signaling. The chain is E3 ubiquitin-protein ligase MGRN1 (Mgrn1) from Mus musculus (Mouse).